The chain runs to 264 residues: S-adenosylmethionine decarboxylase proenzyme (264 aa).

S113 serves as the catalytic Schiff-base intermediate with substrate; via pyruvic acid. S113 is modified (pyruvic acid (Ser); by autocatalysis). H118 (proton acceptor; for processing activity) is an active-site residue. C141 serves as the catalytic Proton donor; for catalytic activity.

Belongs to the prokaryotic AdoMetDC family. Type 2 subfamily. Heterooctamer of four alpha and four beta chains arranged as a tetramer of alpha/beta heterodimers. Requires pyruvate as cofactor. Post-translationally, is synthesized initially as an inactive proenzyme. Formation of the active enzyme involves a self-maturation process in which the active site pyruvoyl group is generated from an internal serine residue via an autocatalytic post-translational modification. Two non-identical subunits are generated from the proenzyme in this reaction, and the pyruvate is formed at the N-terminus of the alpha chain, which is derived from the carboxyl end of the proenzyme. The post-translation cleavage follows an unusual pathway, termed non-hydrolytic serinolysis, in which the side chain hydroxyl group of the serine supplies its oxygen atom to form the C-terminus of the beta chain, while the remainder of the serine residue undergoes an oxidative deamination to produce ammonia and the pyruvoyl group blocking the N-terminus of the alpha chain.

The catalysed reaction is S-adenosyl-L-methionine + H(+) = S-adenosyl 3-(methylsulfanyl)propylamine + CO2. It functions in the pathway amine and polyamine biosynthesis; S-adenosylmethioninamine biosynthesis; S-adenosylmethioninamine from S-adenosyl-L-methionine: step 1/1. Its function is as follows. Catalyzes the decarboxylation of S-adenosylmethionine to S-adenosylmethioninamine (dcAdoMet), the propylamine donor required for the synthesis of the polyamines spermine and spermidine from the diamine putrescine. This Pseudomonas aeruginosa (strain UCBPP-PA14) protein is S-adenosylmethionine decarboxylase proenzyme.